The following is a 246-amino-acid chain: Adenosylcobinamide-GDP ribazoletransferase (246 aa).

The next 6 helical transmembrane spans lie at 34–54 (IVTF…VALL), 59–79 (CGVP…TGGF), 113–133 (GGLA…ELLL), 136–156 (IHPI…AALL), 181–201 (TLVT…LQGL), and 203–223 (AALI…RTLG).

Belongs to the CobS family. The cofactor is Mg(2+).

It localises to the cell inner membrane. The enzyme catalyses alpha-ribazole + adenosylcob(III)inamide-GDP = adenosylcob(III)alamin + GMP + H(+). It catalyses the reaction alpha-ribazole 5'-phosphate + adenosylcob(III)inamide-GDP = adenosylcob(III)alamin 5'-phosphate + GMP + H(+). The protein operates within cofactor biosynthesis; adenosylcobalamin biosynthesis; adenosylcobalamin from cob(II)yrinate a,c-diamide: step 7/7. In terms of biological role, joins adenosylcobinamide-GDP and alpha-ribazole to generate adenosylcobalamin (Ado-cobalamin). Also synthesizes adenosylcobalamin 5'-phosphate from adenosylcobinamide-GDP and alpha-ribazole 5'-phosphate. This chain is Adenosylcobinamide-GDP ribazoletransferase, found in Klebsiella pneumoniae subsp. pneumoniae (strain ATCC 700721 / MGH 78578).